Here is a 291-residue protein sequence, read N- to C-terminus: MFIIELIKGIILGVVEGLTEFAPVSSTGHMILVDDMWLKSSEFLGSQSAFTFKIVIQLGSVFAAAWVFRERFLEILHIGKHKHVEGDNNQQRRSKPRRLNLLHVLVGMVPAGILGLLFDDFIEEHLFSVPTVMIGLFVGAIYMIIADKYSAKVKNPQTVDQINYFQAFVIGISQAVAMWPGFSRSGSTISTGVLMKLNHKAASDFTFIMAVPIMLAASGLSLLKHYQDIQITDIPFYILGFLAAFTVGLIAIKTFLHLINKIKLIPFAIYRIVLVIFIAILYFGFGIGKGI.

A run of 8 helical transmembrane segments spans residues 1–21 (MFIIELIKGIILGVVEGLTEF), 48–68 (SAFTFKIVIQLGSVFAAAWVF), 102–122 (LHVLVGMVPAGILGLLFDDFI), 126–146 (LFSVPTVMIGLFVGAIYMIIA), 162–182 (INYFQAFVIGISQAVAMWPGF), 203–223 (SDFTFIMAVPIMLAASGLSLL), 236–256 (FYILGFLAAFTVGLIAIKTFL), and 267–287 (FAIYRIVLVIFIAILYFGFGI).

This sequence belongs to the UppP family.

The protein localises to the cell membrane. It catalyses the reaction di-trans,octa-cis-undecaprenyl diphosphate + H2O = di-trans,octa-cis-undecaprenyl phosphate + phosphate + H(+). Its function is as follows. Catalyzes the dephosphorylation of undecaprenyl diphosphate (UPP). Confers resistance to bacitracin. The polypeptide is Undecaprenyl-diphosphatase (Staphylococcus aureus (strain MSSA476)).